Here is a 490-residue protein sequence, read N- to C-terminus: Cytochrome P450 71A21 (490 aa).

A helical transmembrane segment spans residues 1 to 21; sequence MESMTMIILQSLIIFITILFF. Cys432 lines the heme pocket.

It belongs to the cytochrome P450 family. Heme serves as cofactor.

It localises to the membrane. The protein is Cytochrome P450 71A21 (CYP71A21) of Arabidopsis thaliana (Mouse-ear cress).